A 432-amino-acid polypeptide reads, in one-letter code: Nuclear pore complex-interacting protein family member B9 (432 aa).

Disordered stretches follow at residues 260–280 (RMGR…NSLS) and 353–420 (SPLP…LRTR). Positions 270–280 (QQHSITDNSLS) are enriched in polar residues. Positions 374–402 (EVEKPPKPKRWRVDEVEQSPKPKRQREAE) are enriched in basic and acidic residues. Positions 408-420 (KPKRRRLSKLRTR) are enriched in basic residues.

It belongs to the NPIP family.

This chain is Nuclear pore complex-interacting protein family member B9 (NPIPB9), found in Homo sapiens (Human).